Here is an 887-residue protein sequence, read N- to C-terminus: Amyloid-beta-like protein (887 aa).

A signal peptide spans 1–27 (MCAALRRNLLLRSLWVVLAIGTAQVQA). Topologically, residues 28–813 (ASPRWEPQIA…HAAKEGRNVY (786 aa)) are extracellular. Positions 30-133 (PRWEPQIAVL…KPFRCLGPFQ (104 aa)) are GFLD subdomain. Positions 30-199 (PRWEPQIAVL…SGVEFVCCPK (170 aa)) constitute an E1 domain. 6 cysteine pairs are disulfide-bonded: C40–C70, C81–C128, C106–C116, C143–C197, C154–C184, and C168–C196. Positions 141 to 199 (EGCLFDHIHNASRCWPFVRWNQTGAAACQERGMQMRSFAMLLPCGISVFSGVEFVCCPK) are cuBD subdomain. N150 and N161 each carry an N-linked (GlcNAc...) asparagine glycan. Disordered stretches follow at residues 225-365 (NDEL…STPQ) and 377-396 (NSGNSGTGAGAPPSTAQPTS). N-linked (GlcNAc...) asparagine glycans are attached at residues N237 and N240. Residues 246–267 (NEDDLDDEDDLMGDDEEDDMVA) show a composition bias toward acidic residues. Over residues 268–292 (DEAATAGGSPNTGSSGDSNSGSLDD) the composition is skewed to low complexity. The span at 293–321 (INAEYDSGEEGDNYEEDGAGSESEAEVEA) shows a compositional bias: acidic residues. Residues 329–352 (AKVVSLKSDSSSPSSAPVAPAPEK) are compositionally biased toward low complexity. The E2 domain maps to 395-597 (TSDPYFTHFD…AKIAQLMNDY (203 aa)). An N-linked (GlcNAc...) asparagine glycan is attached at N574. Residues 675 to 743 (KSQVAEQQSQ…TEYGEATVSS (69 aa)) form a disordered region. Residues 681–699 (QQSQPTQSSTQSQAQQQQQ) show a composition bias toward low complexity. The helical transmembrane segment at 814–834 (FTLSFAGIALMAAVFVGVAVA) threads the bilayer. At 835 to 887 (KWRTSRSPHAQGFIEVDQNVTTHHPIVREEKIVPNMQINGYENPTYKYFEVKE) the chain is on the cytoplasmic side. The YENPXY motif signature appears at 875-880 (YENPTY).

This sequence belongs to the APP family. Interacts (via the intracellular domain, ICD) with APP-BP1. In terms of tissue distribution, expressed in postmitotic neurons in the central and peripheral nervous systems. Within the nervous system, transcripts are not observed in neuroblasts, newly generated neurons and at least one class of presumed glial cells.

Its subcellular location is the membrane. During development, plays a role in the regulation of the neddylation pathway. Appl and APP-BP1 interact antagonistically during development. In Drosophila melanogaster (Fruit fly), this protein is Amyloid-beta-like protein (Appl).